A 665-amino-acid chain; its full sequence is Macrolide export ATP-binding/permease protein MacB (665 aa).

In terms of domain architecture, ABC transporter spans 17-255 (MQVKGLIREF…VAQFSSIIDK (239 aa)). 53–60 (GQSGSGKS) contributes to the ATP binding site. 4 helical membrane-spanning segments follow: residues 287-307 (LLTMLGIIIGIASVVSVVGLG), 544-564 (IAIISLIVGGIGVMNIMLVSV), 588-608 (FLIEAVLVCILGGLLGIGMAF), and 630-650 (SIIAAFVCSTLIGVVFGFLPA).

It belongs to the ABC transporter superfamily. Macrolide exporter (TC 3.A.1.122) family. Homodimer. Part of the tripartite efflux system MacAB-TolC, which is composed of an inner membrane transporter, MacB, a periplasmic membrane fusion protein, MacA, and an outer membrane component, TolC. The complex forms a large protein conduit and can translocate molecules across both the inner and outer membranes. Interacts with MacA.

It is found in the cell inner membrane. In terms of biological role, part of the tripartite efflux system MacAB-TolC. MacB is a non-canonical ABC transporter that contains transmembrane domains (TMD), which form a pore in the inner membrane, and an ATP-binding domain (NBD), which is responsible for energy generation. Confers resistance against macrolides. This Psychrobacter arcticus (strain DSM 17307 / VKM B-2377 / 273-4) protein is Macrolide export ATP-binding/permease protein MacB.